Here is a 433-residue protein sequence, read N- to C-terminus: Inward rectifier potassium channel 18 (433 aa).

Over 1-77 the chain is Cytoplasmic; the sequence is MTAASRANPY…LADMFTTCVD (77 aa). A helical transmembrane segment spans residues 78–104; it reads IRWRYMLLIFSLAFLASWLLFGVIFWV. Residues 105–129 lie on the Extracellular side of the membrane; the sequence is IAVAHGDLEPAEGHGRTPCVMQVHG. The helical; Pore-forming intramembrane region spans 130-146; the sequence is FMAAFLFSIETQTTIGY. The Selectivity filter motif lies at 143 to 148; the sequence is TIGYGL. At 147-155 the chain is on the extracellular side; it reads GLRCVTEEC. A helical membrane pass occupies residues 156-183; that stretch reads LVAVFMVVAQSIVGCIIDSFMIGAIMAK. Over 184–433 the chain is Cytoplasmic; sequence MARPKKRAQT…QRPYRRGSEI (250 aa). Positions 387–433 are disordered; it reads DEEDEADGDQDGRSRDGLSPQARHDFDRLQAGGGVLEQRPYRRGSEI. The span at 396-414 shows a compositional bias: basic and acidic residues; sequence QDGRSRDGLSPQARHDFDR.

It belongs to the inward rectifier-type potassium channel (TC 1.A.2.1) family. KCNJ12 subfamily. In terms of assembly, can form heteromeric channels with Kir2.1/KCNJ2. Can form heteromeric channels with Kir2.2/KCNJ12. In terms of processing, probably phosphorylated by PKC; decreases single-channel open probability. Specifically expressed in skeletal muscle.

It localises to the cell membrane. The protein localises to the endoplasmic reticulum. The enzyme catalyses K(+)(in) = K(+)(out). In terms of biological role, inward rectifier potassium channels are characterized by a greater tendency to allow potassium to flow into the cell rather than out of it. Their voltage dependence is regulated by the concentration of extracellular potassium; as external potassium is raised, the voltage range of the channel opening shifts to more positive voltages. The inward rectification is mainly due to the blockage of outward current by internal magnesium. This chain is Inward rectifier potassium channel 18 (KCNJ18), found in Homo sapiens (Human).